We begin with the raw amino-acid sequence, 304 residues long: Killer cell immunoglobulin-like receptor 2DS5 (304 aa).

The first 21 residues, 1-21 (MSLMVISMACVAFFLLQGAWP), serve as a signal peptide directing secretion. Over 22–245 (HEGFRRKPSL…SETGNPRHLH (224 aa)) the chain is Extracellular. 2 consecutive Ig-like C2-type domains span residues 42–107 (EETV…VTHS) and 142–205 (GESV…FRDS). 2 disulfide bridges follow: C49–C100 and C149–C198. N67, N84, N178, and N223 each carry an N-linked (GlcNAc...) asparagine glycan. The chain crosses the membrane as a helical span at residues 246–264 (VLIGTSVVKLPFTILLFFL). Over 265–304 (LHRWCSNKKNASVMDQGPAGNRTVNREDSDEQDHQEVSYA) the chain is Cytoplasmic. The disordered stretch occupies residues 275–304 (ASVMDQGPAGNRTVNREDSDEQDHQEVSYA). Residues 288 to 304 (VNREDSDEQDHQEVSYA) show a composition bias toward basic and acidic residues.

This sequence belongs to the immunoglobulin superfamily. Interacts with TYROBP. Post-translationally, N-glycosylated, glycosylation varies depending on the allele which alters cell surface expression levels. Expressed on a discrete subset of peripheral blood NK cells.

It localises to the cell membrane. Activating natural killer (NK) receptor that recognizes C2 epitopes of HLA-C alleles. Bridging the innate and adaptive immune systems, NK cells express a number of cell surface receptors which either inhibit or stimulate their cytotoxicity. Able to activate NK cells citotoxicity and cytokine production such as IFNG. Receptor functions are attenuated even lost in some alleles, such as KIR2DS5*002 represented in this entry. The polypeptide is Killer cell immunoglobulin-like receptor 2DS5 (Homo sapiens (Human)).